Here is a 31-residue protein sequence, read N- to C-terminus: Toxin BmKK16 (31 aa).

At Gln-1 the chain carries Pyrrolidone carboxylic acid. Disulfide bonds link Cys-4/Cys-20, Cys-10/Cys-25, and Cys-14/Cys-27. Pro-31 carries the post-translational modification Proline amide.

It belongs to the short scorpion toxin superfamily. Potassium channel inhibitor family. Alpha-KTx 17 subfamily. In terms of processing, the N-terminus is blocked. Expressed by the venom gland.

It is found in the secreted. Its function is as follows. Blocker of potassium channels (Kv). This Olivierus martensii (Manchurian scorpion) protein is Toxin BmKK16.